The sequence spans 261 residues: Chanoclavine-I dehydrogenase ifgE (261 aa).

The N-terminal stretch at 1–20 is a signal peptide; sequence MASVKSRVFAITGGASGIGA. Positions 18, 48, 66, 132, 166, 170, and 201 each coordinate NADP(+). The active-site Proton acceptor is Tyr166. Catalysis depends on Lys170, which acts as the Lowers pKa of active site Tyr.

It belongs to the short-chain dehydrogenases/reductases (SDR) family.

Its pathway is alkaloid biosynthesis; ergot alkaloid biosynthesis. Its function is as follows. Chanoclavine-I dehydrogenase; part of the gene cluster that mediates the biosynthesis of isofumigaclavines, fungal ergot alkaloids. The tryptophan dimethylallyltransferase ifgA catalyzes the first step of ergot alkaloid biosynthesis by condensing dimethylallyl diphosphate (DMAP) and tryptophan to form 4-dimethylallyl-L-tryptophan. The second step is catalyzed by the methyltransferase ifgB that methylates 4-dimethylallyl-L-tryptophan in the presence of S-adenosyl-L-methionine, resulting in the formation of N-methyl-dimethylallyl-L-tryptophan. The catalase ifgD and the FAD-dependent oxidoreductase ifgC then transform N-methyl-dimethylallyl-L-tryptophan to chanoclavine-I which is further oxidized by ifgE in the presence of NAD(+), resulting in the formation of chanoclavine-I aldehyde. The chanoclavine-I aldehyde reductases ifgG and/or fgaOx3 reduce chanoclavine-I aldehyde to dihydrochanoclavine-I aldehyde that spontaneously dehydrates to form 6,8-dimethyl-6,7-didehydroergoline. The festuclavine dehydrogenases ifgF1 and/or ifgF2 then catalyze the reduction of 6,8-dimethyl-6,7-didehydroergoline to form festuclavine. Hydrolysis of festuclavine by a yet undetermined cytochrome P450 monooxygenase (called ifgH) then leads to the formation of isofumigaclavine B which is in turn acetylated by ifgI to isofumigaclavine A. Penicillium roqueforti has interestingly at least two sets of genes for the consumption of chanoclavine-I aldehyde on three different loci, the OYEs ifgG/fgaOx3 and the festuclavine synthase homologs ifgF1/ifgF2. The reason for the duplication of these genes is unclear, probably to ensure the conversion of chanoclavine-I aldehyde by differential gene expression under various environmental conditions. This is Chanoclavine-I dehydrogenase ifgE from Penicillium roqueforti (strain FM164).